We begin with the raw amino-acid sequence, 239 residues long: Sugar fermentation stimulation protein homolog (239 aa).

This sequence belongs to the SfsA family.

This is Sugar fermentation stimulation protein homolog from Sinorhizobium medicae (strain WSM419) (Ensifer medicae).